Reading from the N-terminus, the 447-residue chain is Argininosuccinate synthase (447 aa).

ATP is bound by residues 20 to 28 and A46; that span reads AFSGGLDTS. Y102 is an L-citrulline binding site. ATP-binding residues include G132 and T134. The L-aspartate site is built by T134, N138, and D139. N138 lines the L-citrulline pocket. An ATP-binding site is contributed by D139. 2 residues coordinate L-citrulline: R142 and S195. D197 lines the ATP pocket. Residues T204, E206, and E283 each coordinate L-citrulline.

This sequence belongs to the argininosuccinate synthase family. Type 2 subfamily. As to quaternary structure, homotetramer.

It is found in the cytoplasm. It catalyses the reaction L-citrulline + L-aspartate + ATP = 2-(N(omega)-L-arginino)succinate + AMP + diphosphate + H(+). The protein operates within amino-acid biosynthesis; L-arginine biosynthesis; L-arginine from L-ornithine and carbamoyl phosphate: step 2/3. This is Argininosuccinate synthase (argG) from Neisseria meningitidis serogroup A / serotype 4A (strain DSM 15465 / Z2491).